We begin with the raw amino-acid sequence, 176 residues long: Probable inosine/xanthosine triphosphatase (176 aa).

Aspartate 36 is a Mg(2+) binding site.

It belongs to the YjjX NTPase family. As to quaternary structure, homodimer. The cofactor is Mg(2+). Mn(2+) is required as a cofactor.

The enzyme catalyses XTP + H2O = XDP + phosphate + H(+). It catalyses the reaction ITP + H2O = IDP + phosphate + H(+). Phosphatase that hydrolyzes non-canonical purine nucleotides such as XTP and ITP to their respective diphosphate derivatives. Probably excludes non-canonical purines from DNA/RNA precursor pool, thus preventing their incorporation into DNA/RNA and avoiding chromosomal lesions. This is Probable inosine/xanthosine triphosphatase from Saccharolobus solfataricus (strain ATCC 35092 / DSM 1617 / JCM 11322 / P2) (Sulfolobus solfataricus).